Reading from the N-terminus, the 314-residue chain is Transcriptional activator RhrA (314 aa).

The 101-residue stretch at 210–310 (ASIKMRVEQN…GVRPSDLRRL (101 aa)) folds into the HTH araC/xylS-type domain. 2 consecutive DNA-binding regions (H-T-H motif) follow at residues 228 to 249 (TDVA…SREG) and 277 to 300 (ISQI…RSRY).

Transcriptional activator of the rhizobactin regulon. The chain is Transcriptional activator RhrA (rhrA) from Rhizobium meliloti (strain 1021) (Ensifer meliloti).